A 697-amino-acid chain; its full sequence is Glycine--tRNA ligase beta subunit (697 aa).

Belongs to the class-II aminoacyl-tRNA synthetase family. Tetramer of two alpha and two beta subunits.

Its subcellular location is the cytoplasm. The enzyme catalyses tRNA(Gly) + glycine + ATP = glycyl-tRNA(Gly) + AMP + diphosphate. The protein is Glycine--tRNA ligase beta subunit of Cereibacter sphaeroides (strain ATCC 17023 / DSM 158 / JCM 6121 / CCUG 31486 / LMG 2827 / NBRC 12203 / NCIMB 8253 / ATH 2.4.1.) (Rhodobacter sphaeroides).